A 351-amino-acid polypeptide reads, in one-letter code: Dihydroorotate dehydrogenase (quinone) (351 aa).

FMN-binding positions include 67–71 and threonine 91; that span reads AGFDK. Lysine 71 is a substrate binding site. A substrate-binding site is contributed by 116-120; it reads NAMGF. FMN is bound by residues asparagine 145 and asparagine 178. Asparagine 178 is a binding site for substrate. The active-site Nucleophile is serine 181. Asparagine 183 serves as a coordination point for substrate. Lysine 214 and threonine 242 together coordinate FMN. Residue 243 to 244 participates in substrate binding; it reads NT. Residues glycine 262, glycine 291, and 312 to 313 each bind FMN; that span reads YS.

Belongs to the dihydroorotate dehydrogenase family. Type 2 subfamily. In terms of assembly, monomer. The cofactor is FMN.

Its subcellular location is the cell membrane. It catalyses the reaction (S)-dihydroorotate + a quinone = orotate + a quinol. The protein operates within pyrimidine metabolism; UMP biosynthesis via de novo pathway; orotate from (S)-dihydroorotate (quinone route): step 1/1. Its function is as follows. Catalyzes the conversion of dihydroorotate to orotate with quinone as electron acceptor. In Helicobacter pylori (strain G27), this protein is Dihydroorotate dehydrogenase (quinone).